The sequence spans 154 residues: S-ribosylhomocysteine lyase (154 aa).

The Fe cation site is built by His58, His62, and Cys125.

It belongs to the LuxS family. Homodimer. The cofactor is Fe cation.

It catalyses the reaction S-(5-deoxy-D-ribos-5-yl)-L-homocysteine = (S)-4,5-dihydroxypentane-2,3-dione + L-homocysteine. Involved in the synthesis of autoinducer 2 (AI-2) which is secreted by bacteria and is used to communicate both the cell density and the metabolic potential of the environment. The regulation of gene expression in response to changes in cell density is called quorum sensing. Catalyzes the transformation of S-ribosylhomocysteine (RHC) to homocysteine (HC) and 4,5-dihydroxy-2,3-pentadione (DPD). The protein is S-ribosylhomocysteine lyase of Dichelobacter nodosus (strain VCS1703A).